The following is a 457-amino-acid chain: Ribosomal protein uS12 methylthiotransferase RimO (457 aa).

The MTTase N-terminal domain maps to 6–116 (PKVGFVSLGC…VMEAVHAALP (111 aa)). [4Fe-4S] cluster contacts are provided by Cys-15, Cys-51, Cys-80, Cys-147, Cys-151, and Cys-154. The region spanning 133–371 (LTPRHYAYLK…AKQAQISALR (239 aa)) is the Radical SAM core domain. Residues 373-441 (ESKIGSVQQC…EHDLFGDALP (69 aa)) form the TRAM domain.

It belongs to the methylthiotransferase family. RimO subfamily. Requires [4Fe-4S] cluster as cofactor.

It localises to the cytoplasm. It carries out the reaction L-aspartate(89)-[ribosomal protein uS12]-hydrogen + (sulfur carrier)-SH + AH2 + 2 S-adenosyl-L-methionine = 3-methylsulfanyl-L-aspartate(89)-[ribosomal protein uS12]-hydrogen + (sulfur carrier)-H + 5'-deoxyadenosine + L-methionine + A + S-adenosyl-L-homocysteine + 2 H(+). Its function is as follows. Catalyzes the methylthiolation of an aspartic acid residue of ribosomal protein uS12. This Xanthomonas axonopodis pv. citri (strain 306) protein is Ribosomal protein uS12 methylthiotransferase RimO.